The primary structure comprises 806 residues: Phenylalanine--tRNA ligase beta subunit (806 aa).

A tRNA-binding domain is found at 44-158 (ADGLSKLVVG…EEAVPGDAIF (115 aa)). In terms of domain architecture, B5 spans 411–486 (TEPVEVSTSL…RIYGYDKLPT (76 aa)). Residues aspartate 464, aspartate 470, glutamate 473, and glutamate 474 each coordinate Mg(2+). An FDX-ACB domain is found at 713–806 (TKFPAMTRDV…LTEQVGAEVR (94 aa)).

This sequence belongs to the phenylalanyl-tRNA synthetase beta subunit family. Type 1 subfamily. As to quaternary structure, tetramer of two alpha and two beta subunits. Mg(2+) is required as a cofactor.

It is found in the cytoplasm. The catalysed reaction is tRNA(Phe) + L-phenylalanine + ATP = L-phenylalanyl-tRNA(Phe) + AMP + diphosphate + H(+). The chain is Phenylalanine--tRNA ligase beta subunit from Streptococcus pyogenes serotype M28 (strain MGAS6180).